The chain runs to 683 residues: Solute carrier family 28 member 3 (683 aa).

The interval 1-71 (MSAFKARGVE…EEEEEGEEDQ (71 aa)) is disordered. Residues 1 to 97 (MSAFKARGVE…FYKRNKKIIH (97 aa)) lie on the Cytoplasmic side of the membrane. Residues 60-71 (DNEEEEEGEEDQ) show a composition bias toward acidic residues. Residues 98 to 118 (YTFLGLLLVGYFALVIAACIV) traverse the membrane as a helical segment. Over 119–123 (NFKQS) the chain is Extracellular. Residues 124–144 (LALLVLTLIAIFFFFWDLFIA) traverse the membrane as a helical segment. Residues 145 to 168 (KYGDKIAEALKPCQKFLDNHWSII) are Cytoplasmic-facing. The chain crosses the membrane as a helical span at residues 169 to 189 (RWFVYGALLLAVILWLTLDTA). Over 190 to 192 (KRG) the chain is Extracellular. Residues 193–214 (ANQVIPFFGLILYILLVFIFSK) form a helical membrane-spanning segment. Residues 215 to 222 (HPTKVRWR) are Cytoplasmic-facing. The chain crosses the membrane as a helical span at residues 223–242 (IVIWGLLLQFIFGLIILRTK). The Extracellular segment spans residues 243–279 (PGLDAFNWLGIQVQTFLKYTDAGSRFLFGDDFQDHFF). The helical transmembrane segment at 280–300 (AFAVLPIVIFFSTVMSMMYYL) threads the bilayer. At 301 to 324 (GLMQWLILKVGWLMQITMGTSPME) the chain is on the cytoplasmic side. Residues 325-343 (SMVSAGNIFVGQTESPLLI) constitute an intramembrane region (helical). The Cytoplasmic segment spans residues 344 to 356 (RPYLADLTISEMH). The helical transmembrane segment at 357–379 (SVMSSGFATIAGSVLGAYISLGI) threads the bilayer. The Extracellular segment spans residues 380–381 (PA). A helical transmembrane segment spans residues 382–403 (AHLLTASVMSAPAALAISKTFW). Over 404 to 438 (PETKKSKNSTQTSIKLEKGQENNLVEAASQGASAA) the chain is Cytoplasmic. Residues 439-464 (VPLVANIAANLIAFLAVLAFINATLS) traverse the membrane as a helical segment. Residues 465–502 (WLGSMFNYPQFSFEIICSYVLMPFAFMMGVNYDDSFLV) lie on the Extracellular side of the membrane. The helical intramembrane region spans 503–522 (AELLGMKTFFNEFVAYQRLS). Residues 523 to 561 (EYIHNRESGGPLFVDGVRQYMSVRSEAIATYALCGFANF) are Extracellular-facing. The chain crosses the membrane as a helical span at residues 562–572 (GSLGIMIGGLS). Topologically, residues 573–585 (SLAPHRKSDIASC) are cytoplasmic. A helical transmembrane segment spans residues 586 to 608 (GIRALIAGTIACFSTACIAGVLY). The Extracellular segment spans residues 609–683 (IPELYCPNLL…GFNCSEVRPE (75 aa)).

It belongs to the concentrative nucleoside transporter (CNT) (TC 2.A.41) family. Homotrimer.

Its subcellular location is the cell membrane. It catalyses the reaction thymidine(out) + 2 Na(+)(out) = thymidine(in) + 2 Na(+)(in). It carries out the reaction cytidine(out) + 2 Na(+)(out) = cytidine(in) + 2 Na(+)(in). The enzyme catalyses uridine(out) + 2 Na(+)(out) = uridine(in) + 2 Na(+)(in). The catalysed reaction is adenosine(out) + 2 Na(+)(out) = adenosine(in) + 2 Na(+)(in). It catalyses the reaction guanosine(out) + 2 Na(+)(out) = guanosine(in) + 2 Na(+)(in). It carries out the reaction inosine(out) + 2 Na(+)(out) = inosine(in) + 2 Na(+)(in). In terms of biological role, sodium-dependent, pyrimidine- and purine-selective. Involved in the homeostasis of endogenous nucleosides. Exhibits the transport characteristics of the nucleoside transport system cib or N3 subtype (N3/cib) (with marked transport of both thymidine and inosine). Employs a 2:1 sodium/nucleoside ratio. Also able to transport gemcitabine, 3'-azido-3'-deoxythymidine (AZT), ribavirin and 3-deazauridine. This is Solute carrier family 28 member 3 (SLC28A3) from Eptatretus stoutii (Pacific hagfish).